The sequence spans 1278 residues: MAQSKRHVYSRTPSGSRMSAEASARPLRVGSRVEVIGKGHRGTVAYVGATLFATGKWVGVILDEAKGKNDGTVQGRKYFTCDEGHGIFVRQSQIQVFEDGADTTSPETPDSSASKVLKREGTDTTAKTSKLRGLKPKKAPTARKTTTRRPKPTRPASTGVAGASSSLGPSGSASAGELSSSEPSTPAQTPLAAPIIPTPVLTSPGAVPPLPSPSKEEEGLRAQVRDLEEKLETLRLKRAEDKAKLKELEKHKIQLEQVQEWKSKMQEQQADLQRRLKEARKEAKEALEAKERYMEEMADTADAIEMATLDKEMAEERAESLQQEVEALKERVDELTTDLEILKAEIEEKGSDGAASSYQLKQLEEQNARLKDALVRMRDLSSSEKQEHVKLQKLMEKKNQELEVVRQQRERLQEELSQAESTIDELKEQVDAALGAEEMVEMLTDRNLNLEEKVRELRETVGDLEAMNEMNDELQENARETELELREQLDMAGARVREAQKRVEAAQETVADYQQTIKKYRQLTAHLQDVNRELTNQQEASVERQQQPPPETFDFKIKFAETKAHAKAIEMELRQMEVAQANRHMSLLTAFMPDSFLRPGGDHDCVLVLLLMPRLICKAELIRKQAQEKFELSENCSERPGLRGAAGEQLSFAAGLVYSLSLLQATLHRYEHALSQCSVDVYKKVGSLYPEMSAHERSLDFLIELLHKDQLDETVNVEPLTKAIKYYQHLYSIHLAEQPEDCTMQLADHIKFTQSALDCMSVEVGRLRAFLQGGQEATDIALLLRDLETSCSDIRQFCKKIRRRMPGTDAPGIPAALAFGPQVSDTLLDCRKHLTWVVAVLQEVAAAAAQLIAPLAENEGLLVAALEELAFKASEQIYGTPSSSPYECLRQSCNILISTMNKLATAMQEGEYDAERPPSKPPPVELRAAALRAEITDAEGLGLKLEDRETVIKELKKSLKIKGEELSEANVRLSLLEKKLDSAAKDADERIEKVQTRLEETQALLRKKEKEFEETMDALQADIDQLEAEKAELKQRLNSQSKRTIEGLRGPPPSGIATLVSGIAGEEQQRGAIPGQAPGSVPGPGLVKDSPLLLQQISAMRLHISQLQHENSILKGAQMKASLASLPPLHVAKLSHEGPGSELPAGALYRKTSQLLETLNQLSTHTHVVDITRTSPAAKSPSAQLMEQVAQLKSLSDTVEKLKDEVLKETVSQRPGATVPTDFATFPSSAFLRAKEEQQDDTVYMGKVTFSCAAGFGQRHRLVLTQEQLHQLHSRLIS.

The interval 1 to 25 (MAQSKRHVYSRTPSGSRMSAEASAR) is disordered. The region spanning 48 to 90 (GATLFATGKWVGVILDEAKGKNDGTVQGRKYFTCDEGHGIFVR) is the CAP-Gly domain. The segment at 100–223 (GADTTSPETP…SKEEEGLRAQ (124 aa)) is disordered. The span at 102 to 114 (DTTSPETPDSSAS) shows a compositional bias: polar residues. Threonine 108 carries the phosphothreonine modification. Over residues 129–152 (SKLRGLKPKKAPTARKTTTRRPKP) the composition is skewed to basic residues. Threonine 145, threonine 146, and threonine 147 each carry phosphothreonine; by SLK. Low complexity predominate over residues 161–184 (AGASSSLGPSGSASAGELSSSEPS). Residue serine 179 is modified to Phosphoserine; by PLK1. The residue at position 212 (serine 212) is a Phosphoserine; by CDK1. 3 coiled-coil regions span residues 213–547 (PSKE…RQQQ), 943–1049 (LKLE…EGLR), and 1182–1211 (SAQL…KETV). The segment covering 214-223 (SKEEEGLRAQ) has biased composition (basic and acidic residues). The interval 911–1278 (EYDAERPPSK…LHQLHSRLIS (368 aa)) is interaction with HPS6.

Belongs to the dynactin 150 kDa subunit family. Monomer and homodimer. Subunit of dynactin, a multiprotein complex part of a tripartite complex with dynein and a adapter, such as BICDL1, BICD2 or HOOK3. The dynactin complex is built around ACTR1A/ACTB filament and consists of an actin-related filament composed of a shoulder domain, a pointed end and a barbed end. Its length is defined by its flexible shoulder domain. The soulder is composed of 2 DCTN1 subunits, 4 DCTN2 and 2 DCTN3. DCTN1/p150(glued) binds directly to microtubules and to cytoplasmic dynein. The 4 DCNT2 (via N-terminus) bind the ACTR1A filament and act as molecular rulers to determine the length. The pointed end is important for binding dynein-dynactin cargo adapters. Consists of 4 subunits: ACTR10, DCNT4, DCTN5 and DCTN6. The barbed end is composed of a CAPZA1:CAPZB heterodimers, which binds ACTR1A/ACTB filament and dynactin and stabilizes dynactin. Interacts with the C-terminus of MAPRE1, MAPRE2 and MAPRE3. Interacts (via C-terminus) with SNX6. Interacts with CLN3, DYNAP, ECPAS and FBXL5. Interacts with MISP; this interaction regulates its distribution at the cell cortex. Interacts with CEP131. Interacts with CEP126. Interacts with CLIP1. Interacts with dynein intermediate chain and dynein heavy chain. Interacts with PLK1 (via POLO-box domain). Interacts with TBCB. Binds preferentially to tyrosinated microtubules than to detyrosinated microtubules. Interacts with PARD6A. Interacts with HPS6. Interacts with KIF3A. Interacts with BICD2. Interacts with DST (isoform 9). Interacts with DST (isoform 1). Identified in a complex with MREG and RILP. Interacts with BCCIP (isoform 2/alpha). Interacts with DCDC1. Interacts with AKNA. Interacts with DYNC1I2. Interacts with RUFY3 and RUFY4. Post-translationally, ubiquitinated by a SCF complex containing FBXL5, leading to its degradation by the proteasome. Phosphorylation by SLK at Thr-145, Thr-146 and Thr-147 targets DCTN1 to the centrosome. It is uncertain if SLK phosphorylates all three threonines or one or two of them. PLK1-mediated phosphorylation at Ser-179 is essential for its localization in the nuclear envelope, promotes its dissociation from microtubules during early mitosis and positively regulates nuclear envelope breakdown during prophase. Brain.

The protein localises to the cytoplasm. It is found in the cytoskeleton. The protein resides in the microtubule organizing center. Its subcellular location is the centrosome. It localises to the centriole. The protein localises to the spindle. It is found in the nucleus envelope. The protein resides in the cell cortex. Its function is as follows. Part of the dynactin complex that activates the molecular motor dynein for ultra-processive transport along microtubules. Plays a key role in dynein-mediated retrograde transport of vesicles and organelles along microtubules by recruiting and tethering dynein to microtubules. Binds to both dynein and microtubules providing a link between specific cargos, microtubules and dynein. Essential for targeting dynein to microtubule plus ends, recruiting dynein to membranous cargos and enhancing dynein processivity (the ability to move along a microtubule for a long distance without falling off the track). Can also act as a brake to slow the dynein motor during motility along the microtubule. Can regulate microtubule stability by promoting microtubule formation, nucleation and polymerization and by inhibiting microtubule catastrophe in neurons. Inhibits microtubule catastrophe by binding both to microtubules and to tubulin, leading to enhanced microtubule stability along the axon. Plays a role in metaphase spindle orientation. Plays a role in centriole cohesion and subdistal appendage organization and function. Its recruitment to the centriole in a KIF3A-dependent manner is essential for the maintenance of centriole cohesion and the formation of subdistal appendage. Also required for microtubule anchoring at the mother centriole. Plays a role in primary cilia formation. This is Dynactin subunit 1 from Homo sapiens (Human).